The chain runs to 1761 residues: 6-methylsalicylic acid synthase AOL_s00215g283 (1761 aa).

The Ketosynthase family 3 (KS3) domain maps to 18-443; it reads QDDIAIIGMA…GTVAHAVIEQ (426 aa). Catalysis depends on for beta-ketoacyl synthase activity residues Cys190, His325, and His367. Residues 554 to 870 form a malonyl-CoA:ACP transacylase (MAT) domain region; sequence VWVFSGHGAH…ALGKLHCHGA (317 aa). The active-site For malonyltransferase activity is the Ser641. The interval 918–1038 is N-terminal hotdog fold; that stretch reads HVLLGAKHQV…GHVANNEWSK (121 aa). Residues 918–1187 are dehydratase (DH) domain; sequence HVLLGAKHQV…NGMRFSAVEG (270 aa). The PKS/mFAS DH domain maps to 918–1191; that stretch reads HVLLGAKHQV…FSAVEGTPGA (274 aa). His950 serves as the catalytic Proton acceptor; for dehydratase activity. A C-terminal hotdog fold region spans residues 1050–1191; sequence LPSVKPSFAT…FSAVEGTPGA (142 aa). The active-site Proton donor; for dehydratase activity is Asp1113. The interval 1399-1587 is ketoreductase (KR) domain; the sequence is GTYLITGGLG…IVSFLWTSWN (189 aa). Residues 1654–1680 form a disordered region; the sequence is PRKRAESSGTEAVSKGEVSEKAPVPKS. The region spanning 1686–1761 is the Carrier domain; the sequence is EYLQNAISEC…HLVKWFEEKI (76 aa). Position 1721 is an O-(pantetheine 4'-phosphoryl)serine (Ser1721).

It carries out the reaction 3 malonyl-CoA + acetyl-CoA + NADPH + 3 H(+) = 6-methylsalicylate + 3 CO2 + NADP(+) + 4 CoA + H2O. It functions in the pathway secondary metabolite biosynthesis; terpenoid biosynthesis. In terms of biological role, 6-methylsalicylic acid synthase; part of the gene cluster that mediates the biosynthesis of sesquiterpenyl epoxy-cyclohexenoids (SECs) such as anthrobotrisins and arthrosporols, metabolites that possess a novel hybrid carbon skeleton consisting of a polyketide-derived epoxycyclohexenol combined with a terpenoid-derived monocyclic sesquiterpenol substructure (PKS-PTS hybrid). The SEC pathway plays an important role for fungal soil colonization via decreasing fungal nematode-capturing ability. Within the pathway, the polyketide synthase (PKS) AOL_s00215g283 catalyzes the biosynthesis of 6-methylsalicylic acid (6-MSA) via condensation of 1 acetate and 3 malonate units. AOL_s00215g283 performs a series of programmed reactions including Claisen condensation, dehydration, reduction, and cyclization to yield 6-MSA. The pathway begins with the biosynthesis of 6-methylsalicylic acid (6-MSA), the first precursor of the polyketide-derived epoxycyclohexenol in arthrosporols, by the polyketide synthase (PKS) AOL_s00215g283. The 6-methylsalicylic acid decarboxylase AOL_s00215g281 then catalyzes the decarboxylation of 6-methylsalicylic acid to yield m-cresol. The cytochrome P450 monooxygenase AOL_s00215g282 further oxidizes m-cresol to yield toluquinol. With the assistance of the oxidoreductase AOL_s00215g277, the polyprenyl transferase AOL_s00215g276 catalyzes the farnesylation of toluquinol to produce farnesyl hydroquinone, the hybrid precursor for biosynthesis of SECs. Farnesyl hydroquinone undergoes epoxidation and then subsequent dehydrogenation to form farnesyl epoxy-quinone, the first and simplest SEC. The cytochrome P450 monooxygenase AOL_s00215g278 and the FAD-dependent monooxygenase AOL_s00215g279 might be involved in the oxygenation of the phenol moiety, most likely in the epoxy formation. The cytochrome P450 monooxygenases AOL_s00215g274 and AOL_s00215g280 are involved in specific regional ketone reductions at respectively C-4 and C-1 of farnesyl epoxy-quinone PubMed:33823587. The polypeptide is 6-methylsalicylic acid synthase AOL_s00215g283 (Arthrobotrys oligospora (strain ATCC 24927 / CBS 115.81 / DSM 1491) (Nematode-trapping fungus)).